Here is a 186-residue protein sequence, read N- to C-terminus: Protein Syd (186 aa).

Belongs to the Syd family.

The protein localises to the cell inner membrane. In terms of biological role, interacts with the SecY protein in vivo. May bind preferentially to an uncomplexed state of SecY, thus functioning either as a chelating agent for excess SecY in the cell or as a regulatory factor that negatively controls the translocase function. This chain is Protein Syd, found in Erwinia tasmaniensis (strain DSM 17950 / CFBP 7177 / CIP 109463 / NCPPB 4357 / Et1/99).